The following is a 126-amino-acid chain: Large ribosomal subunit protein bL12 (126 aa).

It belongs to the bacterial ribosomal protein bL12 family. As to quaternary structure, homodimer. Part of the ribosomal stalk of the 50S ribosomal subunit. Forms a multimeric L10(L12)X complex, where L10 forms an elongated spine to which 2 to 4 L12 dimers bind in a sequential fashion. Binds GTP-bound translation factors.

In terms of biological role, forms part of the ribosomal stalk which helps the ribosome interact with GTP-bound translation factors. Is thus essential for accurate translation. The protein is Large ribosomal subunit protein bL12 of Coxiella burnetii (strain CbuK_Q154) (Coxiella burnetii (strain Q154)).